The chain runs to 166 residues: Large ribosomal subunit protein uL10 (166 aa).

The protein belongs to the universal ribosomal protein uL10 family. Part of the ribosomal stalk of the 50S ribosomal subunit. The N-terminus interacts with L11 and the large rRNA to form the base of the stalk. The C-terminus forms an elongated spine to which L12 dimers bind in a sequential fashion forming a multimeric L10(L12)X complex.

Functionally, forms part of the ribosomal stalk, playing a central role in the interaction of the ribosome with GTP-bound translation factors. The protein is Large ribosomal subunit protein uL10 of Pseudomonas syringae pv. syringae (strain B728a).